The following is a 119-amino-acid chain: Large ribosomal subunit protein uL14c (119 aa).

It belongs to the universal ribosomal protein uL14 family. As to quaternary structure, part of the 50S ribosomal subunit.

The protein localises to the plastid. It localises to the chloroplast. Its function is as follows. Binds to 23S rRNA. The chain is Large ribosomal subunit protein uL14c from Ostreococcus tauri.